Reading from the N-terminus, the 378-residue chain is Polygalacturonase (378 aa).

The signal sequence occupies residues 1–20 (MILTRSVVLGFLGSASLALA). A disulfide bond links Cys-39 and Cys-57. 5 PbH1 repeats span residues 172–203 (SSGL…DIGD), 204–225 (SDSI…AINS), 226–246 (GTNI…SIGS), 255–276 (VETV…RVKA), and 284–306 (IKGV…TIRQ). The active-site Proton donor is the Asp-218. A disulfide bridge connects residues Cys-220 and Cys-236. The active site involves His-240. Disulfide bonds link Cys-346-Cys-352 and Cys-370-Cys-378.

It belongs to the glycosyl hydrolase 28 family.

The protein resides in the secreted. It carries out the reaction (1,4-alpha-D-galacturonosyl)n+m + H2O = (1,4-alpha-D-galacturonosyl)n + (1,4-alpha-D-galacturonosyl)m.. This Penicillium expansum (Blue mold rot fungus) protein is Polygalacturonase (PEPG1).